A 353-amino-acid chain; its full sequence is Phospho-N-acetylmuramoyl-pentapeptide-transferase (353 aa).

A run of 10 helical transmembrane segments spans residues 16-36 (YISV…MYLM), 64-84 (AGTP…ATVL), 88-108 (LNNF…LIGI), 130-150 (LIFQ…YGHS), 160-180 (FPLF…IVGS), 198-218 (SILA…AVFA), 228-248 (IAGE…AFLW), 256-276 (VFMG…LAIV), 281-301 (ILLL…ILQV), and 330-350 (KIIV…LLSL).

This sequence belongs to the glycosyltransferase 4 family. MraY subfamily. Mg(2+) serves as cofactor.

The protein resides in the cell inner membrane. It carries out the reaction UDP-N-acetyl-alpha-D-muramoyl-L-alanyl-gamma-D-glutamyl-meso-2,6-diaminopimeloyl-D-alanyl-D-alanine + di-trans,octa-cis-undecaprenyl phosphate = di-trans,octa-cis-undecaprenyl diphospho-N-acetyl-alpha-D-muramoyl-L-alanyl-D-glutamyl-meso-2,6-diaminopimeloyl-D-alanyl-D-alanine + UMP. It participates in cell wall biogenesis; peptidoglycan biosynthesis. Catalyzes the initial step of the lipid cycle reactions in the biosynthesis of the cell wall peptidoglycan: transfers peptidoglycan precursor phospho-MurNAc-pentapeptide from UDP-MurNAc-pentapeptide onto the lipid carrier undecaprenyl phosphate, yielding undecaprenyl-pyrophosphoryl-MurNAc-pentapeptide, known as lipid I. This chain is Phospho-N-acetylmuramoyl-pentapeptide-transferase, found in Aliarcobacter butzleri (strain RM4018) (Arcobacter butzleri).